Consider the following 310-residue polypeptide: Protoheme IX farnesyltransferase 2 (310 aa).

The next 9 membrane-spanning stretches (helical) occupy residues 25 to 45, 49 to 69, 98 to 118, 121 to 141, 145 to 165, 176 to 196, 222 to 242, 245 to 265, and 277 to 297; these read PGII…AAKG, LVLM…GCAI, HVLL…ALFT, LALL…SLYM, SVYG…VGYC, VILL…IAIF, IVLY…AGYT, AFMA…LKGY, and QVFG…ALDF.

Belongs to the UbiA prenyltransferase family. Protoheme IX farnesyltransferase subfamily.

It is found in the cell inner membrane. The enzyme catalyses heme b + (2E,6E)-farnesyl diphosphate + H2O = Fe(II)-heme o + diphosphate. Its pathway is porphyrin-containing compound metabolism; heme O biosynthesis; heme O from protoheme: step 1/1. Its function is as follows. Converts heme B (protoheme IX) to heme O by substitution of the vinyl group on carbon 2 of heme B porphyrin ring with a hydroxyethyl farnesyl side group. The sequence is that of Protoheme IX farnesyltransferase 2 from Shewanella sp. (strain ANA-3).